A 108-amino-acid chain; its full sequence is Ig kappa chain V-V region EPC 109 (108 aa).

The interval 1-23 (DVQMIQSPSSLSASLGDIVTMTC) is framework-1. Cys23 and Cys88 are joined by a disulfide. The interval 24–34 (QASQGTNINLN) is complementarity-determining-1. Residues 35–49 (WFQQKPGKAPKLLIY) are framework-2. The interval 50–56 (GASILEA) is complementarity-determining-2. Residues 57–88 (GVPSRFSGRRYGTDFTLTISSLEDEDMATYFC) form a framework-3 region. Residues 89–97 (LQHSYLPYT) form a complementarity-determining-3 region. The segment at 98–108 (FGGGTKLEKKR) is framework-4.

The polypeptide is Ig kappa chain V-V region EPC 109 (Mus musculus (Mouse)).